We begin with the raw amino-acid sequence, 343 residues long: L-threonine 3-dehydrogenase (343 aa).

C39 provides a ligand contact to Zn(2+). Catalysis depends on charge relay system residues T41 and H44. Positions 64, 65, 94, 97, 100, and 108 each coordinate Zn(2+). NAD(+)-binding positions include I176, D196, R201, 263–265 (LGI), and 287–288 (IY).

Belongs to the zinc-containing alcohol dehydrogenase family. Homotetramer. Zn(2+) serves as cofactor.

Its subcellular location is the cytoplasm. It catalyses the reaction L-threonine + NAD(+) = (2S)-2-amino-3-oxobutanoate + NADH + H(+). Its pathway is amino-acid degradation; L-threonine degradation via oxydo-reductase pathway; glycine from L-threonine: step 1/2. Its function is as follows. Catalyzes the NAD(+)-dependent oxidation of L-threonine to 2-amino-3-ketobutyrate. This chain is L-threonine 3-dehydrogenase, found in Anaeromyxobacter sp. (strain Fw109-5).